Consider the following 34-residue polypeptide: Photosystem II reaction center protein M (34 aa).

The chain crosses the membrane as a helical span at residues 5-25 (ILAFIATALFILIPTAFLLIL).

This sequence belongs to the PsbM family. PSII is composed of 1 copy each of membrane proteins PsbA, PsbB, PsbC, PsbD, PsbE, PsbF, PsbH, PsbI, PsbJ, PsbK, PsbL, PsbM, PsbT, PsbX, PsbY, PsbZ, Psb30/Ycf12, at least 3 peripheral proteins of the oxygen-evolving complex and a large number of cofactors. It forms dimeric complexes.

It is found in the plastid. It localises to the chloroplast thylakoid membrane. Functionally, one of the components of the core complex of photosystem II (PSII). PSII is a light-driven water:plastoquinone oxidoreductase that uses light energy to abstract electrons from H(2)O, generating O(2) and a proton gradient subsequently used for ATP formation. It consists of a core antenna complex that captures photons, and an electron transfer chain that converts photonic excitation into a charge separation. This subunit is found at the monomer-monomer interface. The sequence is that of Photosystem II reaction center protein M from Angiopteris evecta (Mule's foot fern).